Consider the following 313-residue polypeptide: MNTFSQVWVFSDTPSRLPELMNGAQALANQINTFVLNDADGVQAIQLGANHVWKLNGKPDDRMIEDYAGVMADTIRQHGADGLVLLPNTRRGKLLAAKLGYRLKAAVSNDASTVSVQDGKATVKHMVYGGLAIGEERIATPYAVLTISSGTFDAAQPDASRTGETHTVEWQAPAVAITRTATQARQSNSVDLDKARLVVSVGRGIGSKENIALAEQLCKAIGAELACSRPVAENEKWMEHERYVGISNLMLKPELYLAVGISGQIQHMVGANASQTIFAINKDKNAPIFQYADYGIVGDAVKILPALTAALAR.

255–283 (LYLAVGISGQIQHMVGANASQTIFAINKD) is an FAD binding site.

The protein belongs to the ETF alpha-subunit/FixB family. Heterodimer of FixA and FixB.

It participates in amine and polyamine metabolism; carnitine metabolism. Its function is as follows. Required for anaerobic carnitine reduction. May bring reductant to CaiA. The polypeptide is Protein FixB (Escherichia coli O8 (strain IAI1)).